Reading from the N-terminus, the 500-residue chain is Endothelial lipase (500 aa).

A signal peptide spans 1–20; the sequence is MRNTVFLLGFWSVYCYFPAG. Cys-64 and Cys-77 are disulfide-bonded. N-linked (GlcNAc...) asparagine glycans are attached at residues Asn-65, Asn-80, and Asn-136. Catalysis depends on Ser-169, which acts as the Nucleophile. The active-site Charge relay system is the Asp-193. Cysteines 252 and 272 form a disulfide. His-274 acts as the Charge relay system in catalysis. 2 disulfides stabilise this stretch: Cys-297/Cys-316 and Cys-308/Cys-311. 325 to 337 provides a ligand contact to heparin; sequence KMRKKRNSKMYLK. The 136-residue stretch at 347–482 folds into the PLAT domain; sequence YHYQLKVHMF…SPGQELWFHK (136 aa). 2 N-linked (GlcNAc...) asparagine glycosylation sites follow: Asn-359 and Asn-393. Cysteines 463 and 483 form a disulfide. Residue Asn-491 is glycosylated (N-linked (GlcNAc...) asparagine).

The protein belongs to the AB hydrolase superfamily. Lipase family. As to quaternary structure, head to tail homodimer. Expressed in placenta, lung, liver, testis and spleen.

It is found in the secreted. It carries out the reaction a triacylglycerol + H2O = a diacylglycerol + a fatty acid + H(+). The enzyme catalyses a 1,2-diacyl-sn-glycero-3-phosphocholine + H2O = a 2-acyl-sn-glycero-3-phosphocholine + a fatty acid + H(+). It catalyses the reaction 1,2,3-tri-(9Z-octadecenoyl)-glycerol + H2O = di-(9Z)-octadecenoylglycerol + (9Z)-octadecenoate + H(+). The catalysed reaction is 1,2,3-tributanoylglycerol + H2O = dibutanoylglycerol + butanoate + H(+). It carries out the reaction 1,2-dihexadecanoyl-sn-glycero-3-phosphocholine + H2O = hexadecanoyl-sn-glycero-3-phosphocholine + hexadecanoate + H(+). Exerts both phospholipase and triglyceride lipase activities. More active as a phospholipase than a triglyceride lipase. Hydrolyzes triglycerides, both with short-chain fatty acyl groups (tributyrin) and long-chain fatty acyl groups (triolein) with similar levels of activity toward both types of substrates. Hydrolyzes high density lipoproteins (HDL) more efficiently than other lipoproteins. The sequence is that of Endothelial lipase (Lipg) from Mus musculus (Mouse).